The chain runs to 184 residues: Shikimate kinase (184 aa).

17-22 (GAGKTT) is an ATP binding site. T21 lines the Mg(2+) pocket. Substrate contacts are provided by D39, R63, and G85. An ATP-binding site is contributed by R123. Position 142 (R142) interacts with substrate.

This sequence belongs to the shikimate kinase family. As to quaternary structure, monomer. Requires Mg(2+) as cofactor.

It is found in the cytoplasm. The catalysed reaction is shikimate + ATP = 3-phosphoshikimate + ADP + H(+). The protein operates within metabolic intermediate biosynthesis; chorismate biosynthesis; chorismate from D-erythrose 4-phosphate and phosphoenolpyruvate: step 5/7. Functionally, catalyzes the specific phosphorylation of the 3-hydroxyl group of shikimic acid using ATP as a cosubstrate. In Burkholderia pseudomallei (strain 1710b), this protein is Shikimate kinase.